Here is a 256-residue protein sequence, read N- to C-terminus: Short chain dehydrogenase adrF (256 aa).

Positions 11, 57, 119, 151, 155, and 184 each coordinate NADP(+). Y151 (proton acceptor) is an active-site residue. K155 functions as the Lowers pKa of active site Tyr in the catalytic mechanism.

The protein belongs to the short-chain dehydrogenases/reductases (SDR) family.

Its pathway is secondary metabolite biosynthesis; terpenoid biosynthesis. Functionally, short chain dehydrogenase; part of the gene cluster that mediates the biosynthesis of andrastins, meroterpenoid compounds that exhibit inhibitory activity against ras farnesyltransferase, suggesting that they could be promising leads for antitumor agents. The first step of the pathway is the synthesis of 3,5-dimethylorsellinic acid (DMOA) by the polyketide synthase adrD via condensation of one acetyl-CoA starter unit with 3 malonyl-CoA units and 2 methylations. DMAO is then converted to farnesyl-DMAO by the prenyltransferase adrG. The methyltransferase adrK catalyzes the methylation of the carboxyl group of farnesyl-DMAO to farnesyl-DMAO methyl ester which is further converted to epoxyfarnesyl-DMAO methyl ester by the FAD-dependent monooxygenase adrH. The terpene cyclase adrI then catalyzes the carbon skeletal rearrangement to generate the andrastin E, the first compound in the pathway having the andrastin scaffold, with the tetracyclic ring system. The post-cyclization tailoring enzymes adrF, adrE, adrJ, and adrA, are involved in the conversion of andrastin E into andrastin A. The short chain dehydrogenase adrF is responsible for the oxidation of the C-3 a hydroxyl group of andrastin E to yield the corresponding ketone, andrastin D. The ketoreductase adrE stereoselectively reduces the carbonyl moiety to reverse the stereochemistry of the C-3 position to yield andrastin F. The acetyltransferase adrJ is the acetyltransferase that attaches the acetyl group to the C-3 hydroxyl group of andrastin F to yield andrastin C. Finally, the cytochrome P450 monooxygenase adrA catalyzes two sequential oxidation reactions of the C-23 methyl group, to generate the corresponding alcohol andrastin B, and aldehyde andrastin A. This is Short chain dehydrogenase adrF from Penicillium roqueforti.